Consider the following 430-residue polypeptide: Histidinol dehydrogenase (430 aa).

Ser237, Gln259, and His262 together coordinate substrate. Zn(2+) contacts are provided by Gln259 and His262. Catalysis depends on proton acceptor residues Glu327 and His328. His328, Asp361, Glu415, and His420 together coordinate substrate. Asp361 serves as a coordination point for Zn(2+). Zn(2+) is bound at residue His420.

It belongs to the histidinol dehydrogenase family. Zn(2+) serves as cofactor.

It catalyses the reaction L-histidinol + 2 NAD(+) + H2O = L-histidine + 2 NADH + 3 H(+). Its pathway is amino-acid biosynthesis; L-histidine biosynthesis; L-histidine from 5-phospho-alpha-D-ribose 1-diphosphate: step 9/9. Functionally, catalyzes the sequential NAD-dependent oxidations of L-histidinol to L-histidinaldehyde and then to L-histidine. This Mesorhizobium japonicum (strain LMG 29417 / CECT 9101 / MAFF 303099) (Mesorhizobium loti (strain MAFF 303099)) protein is Histidinol dehydrogenase.